The following is a 117-amino-acid chain: Large ribosomal subunit protein uL18 (117 aa).

The protein belongs to the universal ribosomal protein uL18 family. In terms of assembly, part of the 50S ribosomal subunit; part of the 5S rRNA/L5/L18/L25 subcomplex. Contacts the 5S and 23S rRNAs.

This is one of the proteins that bind and probably mediate the attachment of the 5S RNA into the large ribosomal subunit, where it forms part of the central protuberance. In Haemophilus ducreyi (strain 35000HP / ATCC 700724), this protein is Large ribosomal subunit protein uL18.